A 196-amino-acid polypeptide reads, in one-letter code: Zinc finger C2H2 protein ECU03_0940 (196 aa).

2 C2H2-type zinc fingers span residues 130 to 155 (YACE…KEGH) and 166 to 191 (YVCP…KHYH).

The sequence is that of Zinc finger C2H2 protein ECU03_0940 from Encephalitozoon cuniculi (strain GB-M1) (Microsporidian parasite).